A 199-amino-acid polypeptide reads, in one-letter code: 7-methyl-GTP pyrophosphatase (199 aa).

The active-site Proton acceptor is Asp73.

This sequence belongs to the Maf family. YceF subfamily. It depends on a divalent metal cation as a cofactor.

The protein localises to the cytoplasm. It carries out the reaction N(7)-methyl-GTP + H2O = N(7)-methyl-GMP + diphosphate + H(+). Functionally, nucleoside triphosphate pyrophosphatase that hydrolyzes 7-methyl-GTP (m(7)GTP). May have a dual role in cell division arrest and in preventing the incorporation of modified nucleotides into cellular nucleic acids. This Bordetella pertussis (strain Tohama I / ATCC BAA-589 / NCTC 13251) protein is 7-methyl-GTP pyrophosphatase.